Consider the following 280-residue polypeptide: S-methyl-5'-thioadenosine phosphorylase (280 aa).

Phosphate is bound by residues S18, 60–61 (RH), and 93–94 (TA). M196 contacts substrate. T197 contacts phosphate. 220 to 222 (DYD) is a binding site for substrate.

The protein belongs to the PNP/MTAP phosphorylase family. MTAP subfamily. As to quaternary structure, homotrimer.

The protein resides in the cytoplasm. Its subcellular location is the nucleus. The catalysed reaction is S-methyl-5'-thioadenosine + phosphate = 5-(methylsulfanyl)-alpha-D-ribose 1-phosphate + adenine. Its pathway is amino-acid biosynthesis; L-methionine biosynthesis via salvage pathway; S-methyl-5-thio-alpha-D-ribose 1-phosphate from S-methyl-5'-thioadenosine (phosphorylase route): step 1/1. Its function is as follows. Catalyzes the reversible phosphorylation of S-methyl-5'-thioadenosine (MTA) to adenine and 5-methylthioribose-1-phosphate. Involved in the breakdown of MTA, a major by-product of polyamine biosynthesis. Responsible for the first step in the methionine salvage pathway after MTA has been generated from S-adenosylmethionine. Has broad substrate specificity with 6-aminopurine nucleosides as preferred substrates. The polypeptide is S-methyl-5'-thioadenosine phosphorylase (Ciona intestinalis (Transparent sea squirt)).